We begin with the raw amino-acid sequence, 602 residues long: Elongation factor 4 (602 aa).

In terms of domain architecture, tr-type G spans Ser7–Lys189. GTP contacts are provided by residues Asp19–Thr24 and Asn136–Asp139.

This sequence belongs to the TRAFAC class translation factor GTPase superfamily. Classic translation factor GTPase family. LepA subfamily.

It localises to the cell inner membrane. It catalyses the reaction GTP + H2O = GDP + phosphate + H(+). Required for accurate and efficient protein synthesis under certain stress conditions. May act as a fidelity factor of the translation reaction, by catalyzing a one-codon backward translocation of tRNAs on improperly translocated ribosomes. Back-translocation proceeds from a post-translocation (POST) complex to a pre-translocation (PRE) complex, thus giving elongation factor G a second chance to translocate the tRNAs correctly. Binds to ribosomes in a GTP-dependent manner. The polypeptide is Elongation factor 4 (Prochlorococcus marinus (strain MIT 9211)).